Consider the following 320-residue polypeptide: Cytosolic Fe-S cluster assembly factor NUBP1 (320 aa).

M1 carries the N-acetylmethionine modification. Residues C8, C22, C25, and C31 each contribute to the [4Fe-4S] cluster site. Position 62-69 (62-69 (GKGGVGKS)) interacts with ATP. C235 and C238 together coordinate [4Fe-4S] cluster. Residue S319 is modified to Phosphoserine.

It belongs to the Mrp/NBP35 ATP-binding proteins family. NUBP1/NBP35 subfamily. Heterotetramer of 2 NUBP1 and 2 NUBP2 chains. Interacts with KIFC1. Interacts with NUBP2. Interacts with the BBS/CCT complex subunit CCT1. [4Fe-4S] cluster serves as cofactor.

The protein localises to the cytoplasm. It is found in the nucleus. It localises to the cell projection. The protein resides in the cytoskeleton. Its subcellular location is the cilium axoneme. The protein localises to the cilium basal body. It is found in the microtubule organizing center. It localises to the centrosome. The protein resides in the centriole. In terms of biological role, component of the cytosolic iron-sulfur (Fe/S) protein assembly (CIA) machinery. Required for maturation of extramitochondrial Fe-S proteins. The NUBP1-NUBP2 heterotetramer forms a Fe-S scaffold complex, mediating the de novo assembly of an Fe-S cluster and its transfer to target apoproteins. Implicated in the regulation of centrosome duplication. Negatively regulates cilium formation and structure. In Homo sapiens (Human), this protein is Cytosolic Fe-S cluster assembly factor NUBP1.